The sequence spans 917 residues: Hexokinase-2 (917 aa).

An N-acetylmethionine modification is found at methionine 1. Positions 1-16 (MIASHMIACLFTELNQ) are mitochondrial-binding peptide (MBP). Hexokinase domains are found at residues 16–458 (QNQV…MVTA) and 464–906 (ADQH…LITA). ATP contacts are provided by residues arginine 30 and 84-89 (DLGGTN). Residues 73–207 (DGTEHGEFLA…DFDIDIVAVV (135 aa)) are hexokinase small subdomain 1. Residue 84–88 (DLGGT) coordinates D-glucose 6-phosphate. D-glucose is bound by residues 155 to 156 (SF), 172 to 173 (TK), and 208 to 209 (ND). Residues 208–447 (NDTVGTMMTC…CDVRFLRSED (240 aa)) form a hexokinase large subdomain 1 region. Residues aspartate 209 and threonine 232 each contribute to the D-glucose 6-phosphate site. D-glucose-binding positions include asparagine 235, glutamate 260, and 291-294 (QLFE). Residue 413-415 (DGS) coordinates D-glucose 6-phosphate. Residue 425 to 426 (KR) participates in ATP binding. D-glucose 6-phosphate is bound by residues serine 449 and 532-536 (DLGGT). Residues 521–655 (DGTEKGDFLA…EFDLDVVAVV (135 aa)) are hexokinase small subdomain 2. ATP is bound at residue 532–537 (DLGGTN). D-glucose is bound by residues 603–604 (SF), 620–621 (TK), and 656–657 (ND). Positions 656 to 895 (NDTVGTMMTC…CDVSFLESED (240 aa)) are hexokinase large subdomain 2. D-glucose 6-phosphate-binding residues include aspartate 657 and threonine 680. Threonine 680 serves as a coordination point for ATP. D-glucose is bound by residues 682 to 683 (SN), glutamate 708, and 739 to 742 (QRFE). Residues 747–748 (GM), 784–788 (TKFLS), and 863–867 (TLYKL) each bind ATP. D-glucose 6-phosphate is bound by residues 861-863 (DGT) and serine 897.

The protein belongs to the hexokinase family. As to quaternary structure, monomer. Interacts with TIGAR; the interaction increases hexokinase activity in a hypoxia- and HIF1A-dependent manner.

The protein localises to the mitochondrion outer membrane. Its subcellular location is the cytoplasm. It is found in the cytosol. It catalyses the reaction a D-hexose + ATP = a D-hexose 6-phosphate + ADP + H(+). The catalysed reaction is D-fructose + ATP = D-fructose 6-phosphate + ADP + H(+). The enzyme catalyses D-glucose + ATP = D-glucose 6-phosphate + ADP + H(+). It functions in the pathway carbohydrate metabolism; hexose metabolism. The protein operates within carbohydrate degradation; glycolysis; D-glyceraldehyde 3-phosphate and glycerone phosphate from D-glucose: step 1/4. Its activity is regulated as follows. Hexokinase activity is specifically inhibited by 2,6-disubstituted glucosamines. In terms of biological role, catalyzes the phosphorylation of hexose, such as D-glucose and D-fructose, to hexose 6-phosphate (D-glucose 6-phosphate and D-fructose 6-phosphate, respectively). Mediates the initial step of glycolysis by catalyzing phosphorylation of D-glucose to D-glucose 6-phosphate. Plays a key role in maintaining the integrity of the outer mitochondrial membrane by preventing the release of apoptogenic molecules from the intermembrane space and subsequent apoptosis. This chain is Hexokinase-2, found in Rattus norvegicus (Rat).